Consider the following 446-residue polypeptide: Citrate/sodium symporter (446 aa).

A run of 5 helical transmembrane segments spans residues 23–43 (IFGMPLPLYAFALITLLLSHF), 46–66 (AIPTDLVGGFALMFVMGAIFG), 79–99 (IGGAPVMIFLVAAYFVYAGIF), 110–130 (VMDKSNFLNLFIAVLITGAIL), and 148–168 (ILAGIVGASLFGIVIGLCFGI). Isoleucine 181 and glycine 183 together coordinate Na(+). The citrate site is built by asparagine 186 and glycine 187. Transmembrane regions (helical) follow at residues 213-233 (IAILTIANIFAIIFAALLDMI), 267-287 (ETAVGMVLSTTCFLLAYVVAK), 289-309 (ILPSIGGVSIHYFAWMVLIVA), 335-355 (QLLWVLMVGVGVCYTDLQEII), and 364-384 (VIAAIIVVGAVVGAAIGGWLI). Methionine 399 and asparagine 401 together coordinate Na(+). Residues arginine 402, glycine 404, serine 405, and arginine 428 each contribute to the citrate site. The helical transmembrane segment at 425–445 (ISSRLGGGIVLVIASIVFSMM) threads the bilayer.

The protein belongs to the 2-hydroxycarboxylate transporter (2-HCT) (TC 2.A.24) family. In terms of assembly, homodimer.

It is found in the cell inner membrane. It carries out the reaction citrate(out) + 2 Na(+)(out) = citrate(in) + 2 Na(+)(in). In terms of biological role, secondary active transporter that catalyzes the uptake of citrate across the membrane with the concomitant uptake of sodium. Is specific for citrate. In Salmonella pullorum, this protein is Citrate/sodium symporter.